The following is a 228-amino-acid chain: uncharacterized protein (228 aa).

Positions 7–228 constitute an ABC transporter domain; sequence VEVHHLKKSV…LVNGQLQEEA (222 aa). 43 to 50 is an ATP binding site; sequence GESGSGKS.

The protein belongs to the ABC transporter superfamily.

This is an uncharacterized protein from Escherichia coli O157:H7.